The following is a 228-amino-acid chain: Large ribosomal subunit protein bL25 (228 aa).

A disordered region spans residues Glu196–Ala228. Residues Ala209–Ala228 are compositionally biased toward basic and acidic residues.

Belongs to the bacterial ribosomal protein bL25 family. CTC subfamily. In terms of assembly, part of the 50S ribosomal subunit; part of the 5S rRNA/L5/L18/L25 subcomplex. Contacts the 5S rRNA. Binds to the 5S rRNA independently of L5 and L18.

Functionally, this is one of the proteins that binds to the 5S RNA in the ribosome where it forms part of the central protuberance. This Methylorubrum extorquens (strain PA1) (Methylobacterium extorquens) protein is Large ribosomal subunit protein bL25.